Consider the following 1416-residue polypeptide: DNA-directed RNA polymerase subunit beta' (1416 aa).

4 residues coordinate Zn(2+): cysteine 71, cysteine 73, cysteine 86, and cysteine 89. Mg(2+) contacts are provided by aspartate 461, aspartate 463, and aspartate 465. Residues cysteine 815, cysteine 889, cysteine 896, and cysteine 899 each coordinate Zn(2+).

It belongs to the RNA polymerase beta' chain family. The RNAP catalytic core consists of 2 alpha, 1 beta, 1 beta' and 1 omega subunit. When a sigma factor is associated with the core the holoenzyme is formed, which can initiate transcription. Mg(2+) is required as a cofactor. Zn(2+) serves as cofactor.

The catalysed reaction is RNA(n) + a ribonucleoside 5'-triphosphate = RNA(n+1) + diphosphate. Functionally, DNA-dependent RNA polymerase catalyzes the transcription of DNA into RNA using the four ribonucleoside triphosphates as substrates. The polypeptide is DNA-directed RNA polymerase subunit beta' (Haemophilus influenzae (strain 86-028NP)).